Here is a 260-residue protein sequence, read N- to C-terminus: Imidazole glycerol phosphate synthase subunit HisF (260 aa).

Catalysis depends on residues Asp11 and Asp130.

Belongs to the HisA/HisF family. Heterodimer of HisH and HisF.

Its subcellular location is the cytoplasm. The catalysed reaction is 5-[(5-phospho-1-deoxy-D-ribulos-1-ylimino)methylamino]-1-(5-phospho-beta-D-ribosyl)imidazole-4-carboxamide + L-glutamine = D-erythro-1-(imidazol-4-yl)glycerol 3-phosphate + 5-amino-1-(5-phospho-beta-D-ribosyl)imidazole-4-carboxamide + L-glutamate + H(+). The protein operates within amino-acid biosynthesis; L-histidine biosynthesis; L-histidine from 5-phospho-alpha-D-ribose 1-diphosphate: step 5/9. In terms of biological role, IGPS catalyzes the conversion of PRFAR and glutamine to IGP, AICAR and glutamate. The HisF subunit catalyzes the cyclization activity that produces IGP and AICAR from PRFAR using the ammonia provided by the HisH subunit. The sequence is that of Imidazole glycerol phosphate synthase subunit HisF from Psychrobacter cryohalolentis (strain ATCC BAA-1226 / DSM 17306 / VKM B-2378 / K5).